The sequence spans 307 residues: Acyl transferase (307 aa).

Residues serine 116, aspartate 213, and histidine 243 each act as charge relay system in the active site.

Belongs to the LuxD family.

Its pathway is lipid metabolism; fatty acid reduction for biolumincescence. Acyl transferase is part of the fatty acid reductase system required for aldehyde biosynthesis; it produces fatty acids for the luminescent reaction. This is Acyl transferase from Aliivibrio fischeri (strain MJ11) (Vibrio fischeri).